The sequence spans 336 residues: MDLASNLGGKIDKSDVLTAVEKYEQYHVFHGGNEEERKANYTDMVNKYYDLATSFYEYGWGESFHFAQRWKGESLRESIKRHEHFLALQLGIQPGQKVLDVGCGIGGPLREIARFSNSVVTGLNNNEYQITRGKELNRLAGVDKTCNFVKADFMKMPFPENSFDAVYAIEATCHAPDAYGCYKEIYRVLKPGQCFAAYEWCMTDAFDPDNAEHQKIKGEIEIGDGLPDIRLTTKCLEALKQAGFEVIWEKDLAKDSPVPWYLPLDKNHFSLSSFRLTAVGRFITKNMVKILEYIRLAPQGSQRVSNFLEQAAEGLVDGGRREIFTPMYFFLARKPE.

An N-acetylmethionine modification is found at Met-1.

Belongs to the class I-like SAM-binding methyltransferase superfamily. Erg6/SMT family. Highly expressed in vascular tissue, mature leaves and in regions undergoing cellular expansion.

It carries out the reaction cycloartenol + S-adenosyl-L-methionine = 24-methylenecycloartanol + S-adenosyl-L-homocysteine + H(+). Its pathway is steroid biosynthesis; sterol biosynthesis. Catalyzes the methyl transfer from S-adenosyl-methionine to the C-24 of cycloartenol to form 24-methylene cycloartenol. This Arabidopsis thaliana (Mouse-ear cress) protein is Cycloartenol-C-24-methyltransferase (SMT1).